The chain runs to 856 residues: MRVKGIRRNCQHLWIWGTMLFGMWMICSAVEQLWVTVYYGVPVWKEATTTLFCASDAKAYSTEAHKVWATHACVPTNPNPQEVVLENVTENFNMWKNNMVEQMHEDIISLWDQSLKPCVKLTPLCVTLNCIDKNITDWENKTIIGGGEVKNCSFNITTSIRDKVHKEYALFYKLDVVPIKSNNDSSTYTRYRLIHCNTSVITQACSKVSFEPIPIHYCAPAGFAILKCNDKKFNGTGPCTNVSTVQCTHGIRPVVSTQLLLNGSLAEEEIVIRSENFTDNAKTIIVHLNESVEINCTRPNNNVRRRHIHIGPGRAFYTGEIRGNIRQAHCNISRAKWNNTLKQIVEKLREQFKNKTIVFNHSSGGDPEIVTHSFNCGGEFFYCDSTQLFNSTWNVTGISTEGNNNTEENGDTITLPCRIKQIINMWQGVGKAMYAPPIGGQIRCSSNITGLLLTRDGGNSSSREEIFRPGGGNMRDNWRSELYKYKVVKIEPLGVAPTKAKRRVVQREKRAVGAIGAMFLGFLGAAGSTMGAASLTLTVQARQLLSGIVQQQNNLLRAIEAQQHLLQLTVWGIKQLQARVLAVERYLRDQQLLGIWGCSGKLICTTTVPWNASWSNKSMDQIWNNMTWMEWEREIDNYTSLIYNLIEESQNQQEKNEQELLELDKWASLWNWFSITNWLWYIKIFIMIVGGLVGLRIVFSVLSIVNRVRQGYSPLSFQTHLPTPRGPDRPEGTEEEGGERDRDRSVRLVHGFLALIWDDLRSLCLFSYHRLRDLLLIVTRIVELLGRRGWEALKYWWNLLQYWSKELKNSAVGLLNAIAIAVAEGTDRVIEVVQRICRAIIHIPRRIRQGLERALL.

The first 31 residues, 1–31, serve as a signal peptide directing secretion; the sequence is MRVKGIRRNCQHLWIWGTMLFGMWMICSAVE. The Extracellular segment spans residues 32 to 684; the sequence is QLWVTVYYGV…ITNWLWYIKI (653 aa). Cys-53 and Cys-73 are oxidised to a cystine. 13 N-linked (GlcNAc...) asparagine; by host glycosylation sites follow: Asn-87, Asn-134, Asn-140, Asn-151, Asn-155, Asn-183, Asn-197, Asn-234, Asn-241, Asn-262, Asn-276, Asn-289, and Asn-295. Intrachain disulfides connect Cys-118-Cys-205, Cys-125-Cys-196, Cys-130-Cys-152, Cys-218-Cys-247, and Cys-228-Cys-239. The interval 130–151 is V1; it reads CIDKNITDWENKTIIGGGEVKN. Residues 152–196 form a V2 region; it reads CSFNITTSIRDKVHKEYALFYKLDVVPIKSNNDSSTYTRYRLIHC. The segment at 296–329 is V3; that stretch reads CTRPNNNVRRRHIHIGPGRAFYTGEIRGNIRQAH. Residues Cys-296 and Cys-330 are joined by a disulfide bond. N-linked (GlcNAc...) asparagine; by host glycans are attached at residues Asn-331, Asn-338, Asn-354, and Asn-360. The segment at 362–372 is CD4-binding loop; sequence SSGGDPEIVTH. 2 disulfide bridges follow: Cys-376–Cys-444 and Cys-383–Cys-417. The tract at residues 383–417 is V4; that stretch reads CDSTQLFNSTWNVTGISTEGNNNTEENGDTITLPC. N-linked (GlcNAc...) asparagine; by host glycosylation is found at Asn-390, Asn-394, Asn-404, Asn-447, and Asn-459. V5 regions lie at residues 460–470 and 462–470; these read SSSREEIFRPG and SREEIFRPG. Residues 511–532 form a fusion peptide region; that stretch reads AVGAIGAMFLGFLGAAGSTMGA. The immunosuppression stretch occupies residues 574 to 592; it reads KQLQARVLAVERYLRDQQL. An intrachain disulfide couples Cys-598 to Cys-604. 4 N-linked (GlcNAc...) asparagine; by host glycosylation sites follow: Asn-611, Asn-616, Asn-625, and Asn-637. The stretch at 633–667 forms a coiled coil; the sequence is REIDNYTSLIYNLIEESQNQQEKNEQELLELDKWA. Residues 662–683 are MPER; binding to GalCer; the sequence is ELDKWASLWNWFSITNWLWYIK. The helical transmembrane segment at 685–705 threads the bilayer; that stretch reads FIMIVGGLVGLRIVFSVLSIV. The Cytoplasmic portion of the chain corresponds to 706–856; that stretch reads NRVRQGYSPL…IRQGLERALL (151 aa). The YXXL motif; contains endocytosis signal signature appears at 712-715; the sequence is YSPL. A disordered region spans residues 716-742; it reads SFQTHLPTPRGPDRPEGTEEEGGERDR. 2 S-palmitoyl cysteine; by host lipidation sites follow: Cys-764 and Cys-837. Positions 855-856 match the Di-leucine internalization motif motif; the sequence is LL.

Belongs to the HIV-1 env protein family. In terms of assembly, the mature envelope protein (Env) consists of a homotrimer of non-covalently associated gp120-gp41 heterodimers. The resulting complex protrudes from the virus surface as a spike. There seems to be as few as 10 spikes on the average virion. Interacts with host CD4, CCR5 and CXCR4. Gp120 also interacts with the C-type lectins CD209/DC-SIGN and CLEC4M/DC-SIGNR (collectively referred to as DC-SIGN(R)). Gp120 and gp41 interact with GalCer. Gp120 interacts with host ITGA4/ITGB7 complex; on CD4+ T-cells, this interaction results in rapid activation of integrin ITGAL/LFA-1, which facilitates efficient cell-to-cell spreading of HIV-1. Gp120 interacts with cell-associated heparan sulfate; this interaction increases virus infectivity on permissive cells and may be involved in infection of CD4- cells. As to quaternary structure, the mature envelope protein (Env) consists of a homotrimer of non-covalently associated gp120-gp41 heterodimers. The resulting complex protrudes from the virus surface as a spike. There seems to be as few as 10 spikes on the average virion. In terms of processing, highly glycosylated by host. The high number of glycan on the protein is reffered to as 'glycan shield' because it contributes to hide protein sequence from adaptive immune system. Post-translationally, palmitoylation of the transmembrane protein and of Env polyprotein (prior to its proteolytic cleavage) is essential for their association with host cell membrane lipid rafts. Palmitoylation is therefore required for envelope trafficking to classical lipid rafts, but not for viral replication. Specific enzymatic cleavages in vivo yield mature proteins. Envelope glycoproteins are synthesized as an inactive precursor that is heavily N-glycosylated and processed likely by host cell furin in the Golgi to yield the mature SU and TM proteins. The cleavage site between SU and TM requires the minimal sequence [KR]-X-[KR]-R. About 2 of the 9 disulfide bonds of gp41 are reduced by P4HB/PDI, following binding to CD4 receptor.

It is found in the virion membrane. It localises to the host cell membrane. Its subcellular location is the host endosome membrane. Oligomerizes in the host endoplasmic reticulum into predominantly trimers. In a second time, gp160 transits in the host Golgi, where glycosylation is completed. The precursor is then proteolytically cleaved in the trans-Golgi and thereby activated by cellular furin or furin-like proteases to produce gp120 and gp41. Its function is as follows. Attaches the virus to the host lymphoid cell by binding to the primary receptor CD4. This interaction induces a structural rearrangement creating a high affinity binding site for a chemokine coreceptor like CXCR4 and/or CCR5. Acts as a ligand for CD209/DC-SIGN and CLEC4M/DC-SIGNR, which are respectively found on dendritic cells (DCs), and on endothelial cells of liver sinusoids and lymph node sinuses. These interactions allow capture of viral particles at mucosal surfaces by these cells and subsequent transmission to permissive cells. HIV subverts the migration properties of dendritic cells to gain access to CD4+ T-cells in lymph nodes. Virus transmission to permissive T-cells occurs either in trans (without DCs infection, through viral capture and transmission), or in cis (following DCs productive infection, through the usual CD4-gp120 interaction), thereby inducing a robust infection. In trans infection, bound virions remain infectious over days and it is proposed that they are not degraded, but protected in non-lysosomal acidic organelles within the DCs close to the cell membrane thus contributing to the viral infectious potential during DCs' migration from the periphery to the lymphoid tissues. On arrival at lymphoid tissues, intact virions recycle back to DCs' cell surface allowing virus transmission to CD4+ T-cells. In terms of biological role, acts as a class I viral fusion protein. Under the current model, the protein has at least 3 conformational states: pre-fusion native state, pre-hairpin intermediate state, and post-fusion hairpin state. During fusion of viral and target intracellular membranes, the coiled coil regions (heptad repeats) assume a trimer-of-hairpins structure, positioning the fusion peptide in close proximity to the C-terminal region of the ectodomain. The formation of this structure appears to drive apposition and subsequent fusion of viral and target cell membranes. Complete fusion occurs in host cell endosomes and is dynamin-dependent, however some lipid transfer might occur at the plasma membrane. The virus undergoes clathrin-dependent internalization long before endosomal fusion, thus minimizing the surface exposure of conserved viral epitopes during fusion and reducing the efficacy of inhibitors targeting these epitopes. Membranes fusion leads to delivery of the nucleocapsid into the cytoplasm. The polypeptide is Envelope glycoprotein gp160 (Homo sapiens (Human)).